A 200-amino-acid chain; its full sequence is NAD(P)H dehydrogenase (quinone) (200 aa).

The region spanning 4 to 191 (VLVLYYSSYG…GGARYQGALV (188 aa)) is the Flavodoxin-like domain. Residues 10–15 (SSYGHI) and 79–81 (TRF) contribute to the FMN site. An NAD(+)-binding site is contributed by tyrosine 12. Substrate is bound at residue tryptophan 99. Residues 114–120 (STASQHG) and histidine 135 each bind FMN.

Belongs to the WrbA family. Requires FMN as cofactor.

The enzyme catalyses a quinone + NADH + H(+) = a quinol + NAD(+). It catalyses the reaction a quinone + NADPH + H(+) = a quinol + NADP(+). The chain is NAD(P)H dehydrogenase (quinone) from Rhodospirillum centenum (strain ATCC 51521 / SW).